The sequence spans 245 residues: 14-3-3 protein theta (245 aa).

Met-1 carries the N-acetylmethionine modification. Lys-3 carries the post-translational modification N6-acetyllysine. At Lys-49 the chain carries N6-acetyllysine; alternate. A Glycyl lysine isopeptide (Lys-Gly) (interchain with G-Cter in SUMO2); alternate cross-link involves residue Lys-49. Position 68 is an N6-acetyllysine (Lys-68). Tyr-82 is subject to 3'-nitrotyrosine. Ser-92 carries the post-translational modification Phosphoserine. Position 104 is a 3'-nitrotyrosine (Tyr-104). The residue at position 115 (Lys-115) is an N6-acetyllysine. At Ser-232 the chain carries Phosphoserine; by CK1.

This sequence belongs to the 14-3-3 family. As to quaternary structure, homodimer. Interacts with CDK16. Interacts with RGS7 (phosphorylated form). Interacts with SSH1. Interacts with CDKN1B ('Thr-198' phosphorylated form); the interaction translocates CDKN1B to the cytoplasm. Interacts with GAB2. Interacts with the 'Ser-241' phosphorylated form of PDPK1. Interacts with the 'Thr-369' phosphorylated form of DAPK2. Interacts with PI4KB, TBC1D22A and TBC1D22B. Interacts with SLITRK1. Interacts with RIPOR2. Interacts with INAVA; the interaction increases upon PRR (pattern recognition receptor) stimulation and is required for cellular signaling pathway activation and cytokine secretion. Interacts with MARK2, MARK3 and MARK4. Interacts with MEFV.

It localises to the cytoplasm. Its function is as follows. Adapter protein implicated in the regulation of a large spectrum of both general and specialized signaling pathways. Binds to a large number of partners, usually by recognition of a phosphoserine or phosphothreonine motif. Binding generally results in the modulation of the activity of the binding partner. Negatively regulates the kinase activity of PDPK1. The chain is 14-3-3 protein theta (YWHAQ) from Bos taurus (Bovine).